Reading from the N-terminus, the 75-residue chain is Sec-independent protein translocase protein TatA (75 aa).

Residues 1 to 21 (MGGISIWQLLIIVAIIVLLFG) traverse the membrane as a helical segment. Residues 50–75 (DAEFKSLNKDESATAGSEKVKDKEQA) are disordered.

Belongs to the TatA/E family. In terms of assembly, the Tat system comprises two distinct complexes: a TatABC complex, containing multiple copies of TatA, TatB and TatC subunits, and a separate TatA complex, containing only TatA subunits. Substrates initially bind to the TatABC complex, which probably triggers association of the separate TatA complex to form the active translocon.

Its subcellular location is the cell inner membrane. Its function is as follows. Part of the twin-arginine translocation (Tat) system that transports large folded proteins containing a characteristic twin-arginine motif in their signal peptide across membranes. TatA could form the protein-conducting channel of the Tat system. The chain is Sec-independent protein translocase protein TatA from Mannheimia succiniciproducens (strain KCTC 0769BP / MBEL55E).